The following is a 363-amino-acid chain: tRNA(Met) cytidine acetate ligase (363 aa).

ATP is bound by residues 7 to 20 (IAEF…HKYL), G96, N152, and R175.

Belongs to the TmcAL family.

The protein localises to the cytoplasm. The enzyme catalyses cytidine(34) in elongator tRNA(Met) + acetate + ATP = N(4)-acetylcytidine(34) in elongator tRNA(Met) + AMP + diphosphate. Its function is as follows. Catalyzes the formation of N(4)-acetylcytidine (ac(4)C) at the wobble position of elongator tRNA(Met), using acetate and ATP as substrates. First activates an acetate ion to form acetyladenylate (Ac-AMP) and then transfers the acetyl group to tRNA to form ac(4)C34. This Streptococcus gordonii (strain Challis / ATCC 35105 / BCRC 15272 / CH1 / DL1 / V288) protein is tRNA(Met) cytidine acetate ligase.